The sequence spans 394 residues: Envelope glycoprotein D (394 aa).

Positions 1 to 25 (MGGAAARLGAVILFVVIVGLHGVRG) are cleaved as a signal peptide. The tract at residues 25–57 (GKYALADASLKMADPNRFRGKDLPVPDRLTDPP) is interaction with TNFRSF14. Over 26 to 339 (KYALADASLK…PYHPPATPNN (314 aa)) the chain is Virion surface. His64 lines the Zn(2+) pocket. Intrachain disulfides connect Cys91–Cys214, Cys131–Cys227, and Cys143–Cys152. N-linked (GlcNAc...) asparagine; by host glycans are attached at residues Asn119 and Asn146. Asp240 contributes to the Zn(2+) binding site. The profusion stretch occupies residues 261 to 305 (LKIAGWHGPKAPYTSTLLPPELSETPNATQPELAPEDPEDSALLE). Residues 275 to 301 (STLLPPELSETPNATQPELAPEDPEDS) are disordered. An N-linked (GlcNAc...) asparagine; by host glycan is attached at Asn287. Residues 340–364 (MGLIAGAVGGSLLAALVICGIVYWM) form a helical membrane-spanning segment. Residues 365–394 (RRRTQKGPKRIRLPHIREDDQPSSHQPLFY) lie on the Intravirion side of the membrane. A disordered region spans residues 374–394 (RIRLPHIREDDQPSSHQPLFY).

This sequence belongs to the herpesviridae glycoprotein D family. As to quaternary structure, homodimer. Interacts with host receptor TNFRSF14. Interacts with host receptor NECTIN1. Interacts (via profusion domain) with gB; this interaction occurs in the absence of gH/gL. Interacts (via profusion domain) with gH/gL heterodimer; this interaction occurs in the absence of gB. Associates with the gB-gH/gL-gD complex. Interacts (via C-terminus) with UL11 tegument protein. Interacts with host RSAD2.

It localises to the virion membrane. The protein resides in the host Golgi apparatus. Its function is as follows. Envelope glycoprotein that binds to the host cell entry receptors NECTIN1, TNFRSF14/HVEM and 3-O-sulfated heparan sulfate, promoting the virus entry into host cells. May trigger fusion with host membrane, by recruiting the fusion machinery composed of gB and gH/gL. The chain is Envelope glycoprotein D (gD) from Homo sapiens (Human).